The sequence spans 145 residues: Lipoprotein signal peptidase (145 aa).

Helical transmembrane passes span 1 to 21 (MVYIVVLIVILLDQMVKLLVM), 57 to 77 (YLFIVITVVVISFLLIYYYKT), and 79 to 99 (GSGMVTLSTGLIIGGALGNLI). Residues Asp-109 and Asp-123 contribute to the active site. A helical membrane pass occupies residues 115–135 (IWPVFNLADSSVVIGAALLIL).

This sequence belongs to the peptidase A8 family.

It is found in the cell inner membrane. It catalyses the reaction Release of signal peptides from bacterial membrane prolipoproteins. Hydrolyzes -Xaa-Yaa-Zaa-|-(S,diacylglyceryl)Cys-, in which Xaa is hydrophobic (preferably Leu), and Yaa (Ala or Ser) and Zaa (Gly or Ala) have small, neutral side chains.. Its pathway is protein modification; lipoprotein biosynthesis (signal peptide cleavage). Functionally, this protein specifically catalyzes the removal of signal peptides from prolipoproteins. The polypeptide is Lipoprotein signal peptidase (Halothermothrix orenii (strain H 168 / OCM 544 / DSM 9562)).